The sequence spans 356 residues: 3-isopropylmalate dehydrogenase (356 aa).

Substrate is bound by residues Arg95, Arg105, Arg133, and Asp223. Residues Asp223, Asp247, and Asp251 each contribute to the Mg(2+) site. 281-293 (GSAPDIAGQNKAN) serves as a coordination point for NAD(+).

This sequence belongs to the isocitrate and isopropylmalate dehydrogenases family. LeuB type 1 subfamily. As to quaternary structure, homodimer. The cofactor is Mg(2+). Requires Mn(2+) as cofactor.

It localises to the cytoplasm. The catalysed reaction is (2R,3S)-3-isopropylmalate + NAD(+) = 4-methyl-2-oxopentanoate + CO2 + NADH. It functions in the pathway amino-acid biosynthesis; L-leucine biosynthesis; L-leucine from 3-methyl-2-oxobutanoate: step 3/4. In terms of biological role, catalyzes the oxidation of 3-carboxy-2-hydroxy-4-methylpentanoate (3-isopropylmalate) to 3-carboxy-4-methyl-2-oxopentanoate. The product decarboxylates to 4-methyl-2 oxopentanoate. This is 3-isopropylmalate dehydrogenase from Neisseria gonorrhoeae (strain ATCC 700825 / FA 1090).